A 342-amino-acid polypeptide reads, in one-letter code: Tetraacyldisaccharide 4'-kinase (342 aa).

An ATP-binding site is contributed by 68–75 (TVGGTGKT).

Belongs to the LpxK family.

It catalyses the reaction a lipid A disaccharide + ATP = a lipid IVA + ADP + H(+). Its pathway is glycolipid biosynthesis; lipid IV(A) biosynthesis; lipid IV(A) from (3R)-3-hydroxytetradecanoyl-[acyl-carrier-protein] and UDP-N-acetyl-alpha-D-glucosamine: step 6/6. Functionally, transfers the gamma-phosphate of ATP to the 4'-position of a tetraacyldisaccharide 1-phosphate intermediate (termed DS-1-P) to form tetraacyldisaccharide 1,4'-bis-phosphate (lipid IVA). In Burkholderia cenocepacia (strain HI2424), this protein is Tetraacyldisaccharide 4'-kinase.